The chain runs to 393 residues: CAI-1 autoinducer synthase (393 aa).

An N6-(pyridoxal phosphate)lysine modification is found at Lys240.

This sequence belongs to the class-II pyridoxal-phosphate-dependent aminotransferase family. It depends on pyridoxal 5'-phosphate as a cofactor.

In terms of biological role, required for the synthesis of the quorum-sensing autoinducer CAI-1 ((S)-3-hydroxytridecan-4-one) which probably functions as an intragenus signal. The protein is CAI-1 autoinducer synthase (cqsA) of Vibrio campbellii (strain ATCC BAA-1116).